Here is an 82-residue protein sequence, read N- to C-terminus: UPF0180 protein BAA_1480 (82 aa).

The protein belongs to the UPF0180 family.

This Bacillus anthracis (strain A0248) protein is UPF0180 protein BAA_1480.